The primary structure comprises 152 residues: uncharacterized protein (152 aa).

The tract at residues 127–152 (EKEKAERKAEKAKKNKKKSSTKTKKK) is disordered. Residues 136 to 152 (EKAKKNKKKSSTKTKKK) show a composition bias toward basic residues.

Belongs to the mimivirus R546 family.

This is an uncharacterized protein from Sputnik virophage.